Here is a 241-residue protein sequence, read N- to C-terminus: MAGHSKWANIKHKKAAADAKRGKIWTRLIKEITVAARLGGGDADSNPRLRLAMDKATDANMPKDNINRAIQRGVGGLEGANYEEIRYEGYGINGAAVIVDCLTDNRTRTVAEVRHGFDKYGGNMGTSGSVAFLFDHIGQFIFAPGTPEDKLMDAALEAGADDVITHDDGSLEVICPPHDFAKVKTALEAAGFKAELAEVIMKPQTEVVFTGEDAVKMQKLLDVLENLDDVQEVFTNAVIGE.

The protein belongs to the TACO1 family.

The protein localises to the cytoplasm. In Ralstonia pickettii (strain 12J), this protein is Probable transcriptional regulatory protein Rpic_2388.